Consider the following 264-residue polypeptide: MMWNYFVTCIVLYANIISIHTFGLTGGNNLNQALGLTGGNPLDSTLGLSAGNAFPSGMGAMQIPAYLRMAPSVETICSTQSPLLNPRERNGLLSDLVGKEISRRSRFLAANPSLAGTGKWACAANYYSNVMRYRPNELGNVFGDLIDSTGCDGFTCDMVRGVRKTSPMSNFLNAMMISQMMQQPNAAQVPTTSQQQPTSNTGGQQPPTNASNPPTNPQPTPTPAQPTPSGTQVQQTPAANNGLDLTSMFNNPAFQEQLMRLVST.

A signal peptide spans 1–21; the sequence is MMWNYFVTCIVLYANIISIHT. Residues 182–247 are disordered; the sequence is QQPNAAQVPT…AANNGLDLTS (66 aa). Residues 190–213 are compositionally biased toward low complexity; that stretch reads PTTSQQQPTSNTGGQQPPTNASNP. Residue Asn-209 is glycosylated (N-linked (GlcNAc...) asparagine). Residues 214 to 226 show a composition bias toward pro residues; that stretch reads PTNPQPTPTPAQP. A compositionally biased stretch (polar residues) spans 230–247; it reads GTQVQQTPAANNGLDLTS.

In terms of tissue distribution, component of the acid-insoluble and acid-soluble organic matrix of calcified layers of the shell (at protein level).

It is found in the secreted. This is an uncharacterized protein from Lottia gigantea (Giant owl limpet).